Consider the following 458-residue polypeptide: Sphingomyelinase DDB_G0288017 (458 aa).

Residues 91 to 111 (NKKAKSPPPPSSLKQQNLHNN) are disordered. Residue E135 participates in Mg(2+) binding. H447 (proton acceptor) is an active-site residue.

The protein belongs to the neutral sphingomyelinase family. Mg(2+) serves as cofactor.

It catalyses the reaction a sphingomyelin + H2O = phosphocholine + an N-acylsphing-4-enine + H(+). It functions in the pathway lipid metabolism; sphingolipid metabolism. Its function is as follows. Catalyzes the hydrolysis of sphingomyelin to form ceramide and phosphocholine. In Dictyostelium discoideum (Social amoeba), this protein is Sphingomyelinase DDB_G0288017.